The following is an 83-amino-acid chain: Short neurotoxin B (83 aa).

An N-terminal signal peptide occupies residues methionine 1–threonine 21. Intrachain disulfides connect cysteine 24/cysteine 45, cysteine 38/cysteine 62, cysteine 64/cysteine 75, and cysteine 76/cysteine 81.

The protein belongs to the three-finger toxin family. Short-chain subfamily. Type I alpha-neurotoxin sub-subfamily. In terms of tissue distribution, expressed by the venom gland.

It is found in the secreted. Its function is as follows. Binds to muscle nicotinic acetylcholine receptor (nAChR) and inhibit acetylcholine from binding to the receptor, thereby impairing neuromuscular transmission. The chain is Short neurotoxin B from Laticauda laticaudata (Blue-ringed sea krait).